The sequence spans 126 residues: NADH-quinone oxidoreductase subunit A (126 aa).

3 helical membrane passes run 11 to 31 (IAIQ…SSWL), 64 to 84 (FLVA…YPWA), and 98 to 118 (EGFV…IYVI).

The protein belongs to the complex I subunit 3 family. NDH-1 is composed of 14 different subunits. Subunits NuoA, H, J, K, L, M, N constitute the membrane sector of the complex.

It localises to the cell inner membrane. It carries out the reaction a quinone + NADH + 5 H(+)(in) = a quinol + NAD(+) + 4 H(+)(out). NDH-1 shuttles electrons from NADH, via FMN and iron-sulfur (Fe-S) centers, to quinones in the respiratory chain. The immediate electron acceptor for the enzyme in this species is believed to be a menaquinone. Couples the redox reaction to proton translocation (for every two electrons transferred, four hydrogen ions are translocated across the cytoplasmic membrane), and thus conserves the redox energy in a proton gradient. The protein is NADH-quinone oxidoreductase subunit A of Cytophaga hutchinsonii (strain ATCC 33406 / DSM 1761 / CIP 103989 / NBRC 15051 / NCIMB 9469 / D465).